We begin with the raw amino-acid sequence, 333 residues long: Serine/threonine-protein phosphatase PP1-beta (333 aa).

Positions 63, 65, 91, and 123 each coordinate Mn(2+). Histidine 124 (proton donor) is an active-site residue. Residues histidine 172 and histidine 247 each coordinate Mn(2+). The disordered stretch occupies residues glycine 306–lysine 333. A compositionally biased stretch (low complexity) spans alanine 322–lysine 333.

Belongs to the PPP phosphatase family. PP-1 subfamily. Interacts with lab-1; the interaction is direct. Interacts with knl-1; the interaction is direct. Mn(2+) serves as cofactor.

It localises to the cytoplasm. The protein localises to the nucleus. The enzyme catalyses O-phospho-L-seryl-[protein] + H2O = L-seryl-[protein] + phosphate. It catalyses the reaction O-phospho-L-threonyl-[protein] + H2O = L-threonyl-[protein] + phosphate. Functionally, serine/threonine-protein phosphatase essential for chromosomal dynamics during meiosis and mitosis. Antagonizes the function of air-2 in the regulation of chromosome cohesion. Dephosphorylates histone H3 at 'Ser-10'. Also involved in the activation of chloride channel clh-3 during cell swelling and meiotic maturation. Essential for embryogenesis. The chain is Serine/threonine-protein phosphatase PP1-beta (gsp-2) from Caenorhabditis briggsae.